The primary structure comprises 672 residues: Protein seu-1 (672 aa).

2 disordered regions span residues 1 to 463 and 576 to 672; these read MSSI…AGTE and LAPP…LKHL. The span at 8 to 20 shows a compositional bias: basic and acidic residues; sequence NDNRRPTFRDHRT. A compositionally biased stretch (gly residues) spans 25-34; that stretch reads GRGGSGGGGR. A compositionally biased stretch (basic and acidic residues) spans 62–85; sequence RSQDHRQRSPEVRRHRSPEKESKD. Low complexity predominate over residues 87 to 105; it reads VVTSTGSSRGATSASVTSS. 4 stretches are compositionally biased toward basic and acidic residues: residues 107–138, 189–226, 234–268, and 289–306; these read RRHE…DADR, VSRH…KSNG, RRRE…KVED, and EQAK…ESHQ. The span at 307 to 317 shows a compositional bias: low complexity; it reads SAHSAAVSNAS. Residues 322 to 343 are compositionally biased toward acidic residues; sequence SEEELDYEEDDIDVDLDGDIDV. Composition is skewed to basic and acidic residues over residues 366 to 375, 382 to 396, 410 to 424, 436 to 447, 607 to 626, and 636 to 659; these read NDVKDETMEE, PEKK…DDKD, RRED…SDHH, RATDHKESRRSE, SFGD…RHMD, and DHRV…ERGF.

Highly expressed in intestinal cells, lateral hypodermal (seam) cells, Pn.p ventral hypodermal cells, and spermatheca. Expressed at low levels in the ventral nerve cord.

The protein localises to the nucleus. Functionally, together with unc-5, involved in touch neuron axon guidance. During gonad morphogenesis, plays a role in the unc-5-/unc-6-mediated migration of distal tip cells along the body. This chain is Protein seu-1, found in Caenorhabditis elegans.